Here is a 594-residue protein sequence, read N- to C-terminus: Cationic amino acid transporter 1 (594 aa).

The residue at position 2 (A2) is an N-acetylalanine. Topologically, residues 2 to 78 (ASGGGDDGLR…EMKKTLTWWD (77 aa)) are cytoplasmic. A helical transmembrane segment spans residues 79–99 (LMWFGIGAVIGSGIFVLTGLE). Topologically, residues 100 to 104 (ARNHS) are extracellular. N-linked (GlcNAc...) asparagine glycosylation occurs at N102. A helical membrane pass occupies residues 105–125 (GPAVVLSYVVSGVSAMLSVFC). Residues 126-149 (YTEFAVEIPVAGGSFAYLRVELGD) lie on the Cytoplasmic side of the membrane. The helical transmembrane segment at 150–170 (FMAFIAAGNIILEYVVGGAAV) threads the bilayer. Over 171–201 (ARSWTSYFATLLNHKPEDFRIIVHKLGEDYS) the chain is Extracellular. A helical transmembrane segment spans residues 202-222 (HLDPIAVGVCAIICVLAVVGT). At 223–227 (KGSSR) the chain is on the cytoplasmic side. Residues 228–248 (FNYIASIIHMVVILFVIIAGF) traverse the membrane as a helical segment. Residues 249–266 (TKADVKNYSDFTPYGVRG) are Extracellular-facing. A glycan (N-linked (GlcNAc...) asparagine) is linked at N255. A helical membrane pass occupies residues 267–287 (VFKSAAVLFFAYIGFDAVSTM). Over 288–297 (AEETKNPGRD) the chain is Cytoplasmic. The helical transmembrane segment at 298 to 318 (IPIGLVGSMVVTTVCYCLMAV) threads the bilayer. Topologically, residues 319 to 348 (TLCLMQPYQQIDPDAPFSVAFSAVGWDWAK) are extracellular. Residues 349–369 (YIVAFGALKGMTTVLLVGAIG) form a helical membrane-spanning segment. Residues 370 to 393 (QARYMTHIARAHMMPPWLAQVNAK) lie on the Cytoplasmic side of the membrane. A helical membrane pass occupies residues 394–414 (TGTPINATVVMLAATALIAFF). The Extracellular portion of the chain corresponds to 415–418 (TKLK). A helical membrane pass occupies residues 419–439 (ILADLLSVSTLFIFMFVAVAL). The Cytoplasmic segment spans residues 440-457 (LVRRYYVTGETSTRDRNK). The chain crosses the membrane as a helical span at residues 458 to 478 (FLVFLGLILASSTATAVYWAL). Residues 479–483 (EEEGW) are Extracellular-facing. The chain crosses the membrane as a helical span at residues 484–504 (IGYCITVPIWFLSTVAMKFLV). Residues 505 to 511 (PQARAPK) are Cytoplasmic-facing. A helical transmembrane segment spans residues 512–532 (IWGVPLVPWLPSASIAINIFL). Topologically, residues 533 to 543 (LGSIDTKSFVR) are extracellular. Residues 544–564 (FAIWTGILLIYYVLFGLHATY) traverse the membrane as a helical segment. Residues 565–594 (DTAKATLKEKQALQKAEEGGVVADNSCSAT) lie on the Cytoplasmic side of the membrane.

It belongs to the amino acid-polyamine-organocation (APC) superfamily. Cationic amino acid transporter (CAT) (TC 2.A.3.3) family. In terms of tissue distribution, expressed in roots, stems, flowers, petioles, seeds, siliques, and leaves. Mostly present in major veins.

The protein localises to the membrane. Inhibited by the protonophore 2,4-dinitrophenol. In terms of biological role, high-affinity permease involved in the transport of the cationic amino acids (e.g. arginine, lysine, histidine, citrulline, valine, and glutamate). Transport mostly basic amino acids, and, to a lower extent neutral and acidic amino acids. May function as a proton symporter. The polypeptide is Cationic amino acid transporter 1 (CAT1) (Arabidopsis thaliana (Mouse-ear cress)).